Reading from the N-terminus, the 34-residue chain is Photosystem II reaction center protein M (34 aa).

A helical membrane pass occupies residues 7–27 (GFVASLMFILVPAIFLIVLYI).

This sequence belongs to the PsbM family. PSII is composed of 1 copy each of membrane proteins PsbA, PsbB, PsbC, PsbD, PsbE, PsbF, PsbH, PsbI, PsbJ, PsbK, PsbL, PsbM, PsbT, PsbX, PsbY, PsbZ, Psb30/Ycf12, peripheral proteins PsbO, CyanoQ (PsbQ), PsbU, PsbV and a large number of cofactors. It forms dimeric complexes.

It localises to the cellular thylakoid membrane. Functionally, one of the components of the core complex of photosystem II (PSII). PSII is a light-driven water:plastoquinone oxidoreductase that uses light energy to abstract electrons from H(2)O, generating O(2) and a proton gradient subsequently used for ATP formation. It consists of a core antenna complex that captures photons, and an electron transfer chain that converts photonic excitation into a charge separation. This subunit is found at the monomer-monomer interface. The chain is Photosystem II reaction center protein M from Synechococcus sp. (strain CC9605).